Here is a 340-residue protein sequence, read N- to C-terminus: uncharacterized protein (340 aa).

Positions 1 to 20 (MGGARRLKLDGSIPNQLARA) are cleaved as a signal peptide.

This is an uncharacterized protein from Mycobacterium tuberculosis (strain CDC 1551 / Oshkosh).